Consider the following 305-residue polypeptide: Peroxisome assembly protein 26 (305 aa).

The Cytoplasmic portion of the chain corresponds to 1-246 (MKSDASTSAA…RRLWGSVVSH (246 aa)). Residues 247–267 (LLSQPFRKGLLAALILCLLIL) traverse the membrane as a helical; Signal-anchor for type II membrane protein segment. The Peroxisomal matrix portion of the chain corresponds to 268-305 (RFDPAAPSSLPFLYQLTQLFRRIQKATLSRLYPLALRD).

This sequence belongs to the peroxin-26 family. As to quaternary structure, interacts (via its cytoplasmic domain) with PEX6; interaction is direct and is ATP-dependent. Interacts with PEX1; interaction is indirect and is mediated via interaction with PEX6.

The protein localises to the peroxisome membrane. Peroxisomal docking factor that anchors PEX1 and PEX6 to peroxisome membranes. PEX26 is therefore required for the formation of the PEX1-PEX6 AAA ATPase complex, a complex that mediates the extraction of the PEX5 receptor from peroxisomal membrane. In Mus musculus (Mouse), this protein is Peroxisome assembly protein 26.